Reading from the N-terminus, the 208-residue chain is ATP-dependent Clp protease proteolytic subunit (208 aa).

S112 functions as the Nucleophile in the catalytic mechanism. H137 is an active-site residue.

It belongs to the peptidase S14 family. In terms of assembly, fourteen ClpP subunits assemble into 2 heptameric rings which stack back to back to give a disk-like structure with a central cavity, resembling the structure of eukaryotic proteasomes.

Its subcellular location is the cytoplasm. The enzyme catalyses Hydrolysis of proteins to small peptides in the presence of ATP and magnesium. alpha-casein is the usual test substrate. In the absence of ATP, only oligopeptides shorter than five residues are hydrolyzed (such as succinyl-Leu-Tyr-|-NHMec, and Leu-Tyr-Leu-|-Tyr-Trp, in which cleavage of the -Tyr-|-Leu- and -Tyr-|-Trp bonds also occurs).. Cleaves peptides in various proteins in a process that requires ATP hydrolysis. Has a chymotrypsin-like activity. Plays a major role in the degradation of misfolded proteins. The protein is ATP-dependent Clp protease proteolytic subunit of Buchnera aphidicola subsp. Acyrthosiphon pisum (strain APS) (Acyrthosiphon pisum symbiotic bacterium).